Here is a 273-residue protein sequence, read N- to C-terminus: Large ribosomal subunit protein uL2 (273 aa).

A disordered region spans residues 224–260 (AMNPVDHPHGGGEGKTSGGRHPVTPWGKKTKGKKTRK). Over residues 251-260 (KKTKGKKTRK) the composition is skewed to basic residues.

This sequence belongs to the universal ribosomal protein uL2 family. In terms of assembly, part of the 50S ribosomal subunit. Forms a bridge to the 30S subunit in the 70S ribosome.

Functionally, one of the primary rRNA binding proteins. Required for association of the 30S and 50S subunits to form the 70S ribosome, for tRNA binding and peptide bond formation. It has been suggested to have peptidyltransferase activity; this is somewhat controversial. Makes several contacts with the 16S rRNA in the 70S ribosome. The polypeptide is Large ribosomal subunit protein uL2 (Orientia tsutsugamushi (strain Ikeda) (Rickettsia tsutsugamushi)).